A 293-amino-acid polypeptide reads, in one-letter code: ATP synthase gamma chain (293 aa).

The protein belongs to the ATPase gamma chain family. As to quaternary structure, F-type ATPases have 2 components, CF(1) - the catalytic core - and CF(0) - the membrane proton channel. CF(1) has five subunits: alpha(3), beta(3), gamma(1), delta(1), epsilon(1). CF(0) has three main subunits: a, b and c.

It is found in the cell membrane. Its function is as follows. Produces ATP from ADP in the presence of a proton gradient across the membrane. The gamma chain is believed to be important in regulating ATPase activity and the flow of protons through the CF(0) complex. This Streptococcus agalactiae serotype III (strain NEM316) protein is ATP synthase gamma chain.